We begin with the raw amino-acid sequence, 332 residues long: Biotin synthase (332 aa).

The 229-residue stretch at 51 to 279 (YKVQLASLLS…RSRVRLSAGR (229 aa)) folds into the Radical SAM core domain. Residues Cys66, Cys70, and Cys73 each coordinate [4Fe-4S] cluster. [2Fe-2S] cluster contacts are provided by Cys110, Cys142, Cys202, and Arg274.

This sequence belongs to the radical SAM superfamily. Biotin synthase family. Homodimer. [4Fe-4S] cluster is required as a cofactor. The cofactor is [2Fe-2S] cluster.

It carries out the reaction (4R,5S)-dethiobiotin + (sulfur carrier)-SH + 2 reduced [2Fe-2S]-[ferredoxin] + 2 S-adenosyl-L-methionine = (sulfur carrier)-H + biotin + 2 5'-deoxyadenosine + 2 L-methionine + 2 oxidized [2Fe-2S]-[ferredoxin]. It functions in the pathway cofactor biosynthesis; biotin biosynthesis; biotin from 7,8-diaminononanoate: step 2/2. In terms of biological role, catalyzes the conversion of dethiobiotin (DTB) to biotin by the insertion of a sulfur atom into dethiobiotin via a radical-based mechanism. The protein is Biotin synthase of Prochlorococcus marinus (strain SARG / CCMP1375 / SS120).